A 205-amino-acid polypeptide reads, in one-letter code: Alpha-1-acid glycoprotein (205 aa).

Residues 1-18 (MALHMVLVVLSLLPLLEA) form the signal peptide. Residues Asn-25, Asn-34, Asn-76, Asn-94, Asn-104, and Asn-134 are each glycosylated (N-linked (GlcNAc...) asparagine). Cys-91 and Cys-183 form a disulfide bridge.

Belongs to the calycin superfamily. Lipocalin family.

It is found in the secreted. Functions as a transport protein in the blood stream. Binds various ligands in the interior of its beta-barrel domain. Appears to function in modulating the activity of the immune system during the acute-phase reaction. This is Alpha-1-acid glycoprotein (Orm1) from Rattus norvegicus (Rat).